Reading from the N-terminus, the 113-residue chain is CRISPR-associated endoribonuclease Cas2 (113 aa).

Asp33 provides a ligand contact to Mg(2+).

This sequence belongs to the CRISPR-associated endoribonuclease Cas2 protein family. As to quaternary structure, homodimer, forms a heterotetramer with a Cas1 homodimer. Requires Mg(2+) as cofactor.

Its function is as follows. CRISPR (clustered regularly interspaced short palindromic repeat), is an adaptive immune system that provides protection against mobile genetic elements (viruses, transposable elements and conjugative plasmids). CRISPR clusters contain sequences complementary to antecedent mobile elements and target invading nucleic acids. CRISPR clusters are transcribed and processed into CRISPR RNA (crRNA). Functions as a ssRNA-specific endoribonuclease. Involved in the integration of spacer DNA into the CRISPR cassette. The type III-A Csm effector complex binds crRNA and acts as a crRNA-guided RNase, DNase and cyclic oligoadenylate synthase; binding of target RNA cognate to the crRNA is required for all activities. The sequence is that of CRISPR-associated endoribonuclease Cas2 from Mycobacterium tuberculosis (strain CDC 1551 / Oshkosh).